A 127-amino-acid polypeptide reads, in one-letter code: Large ribosomal subunit protein bL20 (127 aa).

The protein belongs to the bacterial ribosomal protein bL20 family.

Binds directly to 23S ribosomal RNA and is necessary for the in vitro assembly process of the 50S ribosomal subunit. It is not involved in the protein synthesizing functions of that subunit. In Mycoplasma pneumoniae (strain ATCC 29342 / M129 / Subtype 1) (Mycoplasmoides pneumoniae), this protein is Large ribosomal subunit protein bL20 (rplT).